We begin with the raw amino-acid sequence, 510 residues long: Serine/threonine-protein kinase RIO3 (510 aa).

Disordered regions lie at residues 100–126 and 143–191; these read GSSS…ENED and DEEN…DMVG. Basic and acidic residues-rich tracts occupy residues 108–118 and 162–179; these read TPDRYHPKTMQ and TKHD…KTFN. One can recognise a Protein kinase domain in the interval 235-510; that stretch reads LLLLKWINQG…RGISPAREYN (276 aa). Residues 241–249 and Lys-275 contribute to the ATP site; that span reads INQGVFDSV. Asp-388 functions as the Proton acceptor in the catalytic mechanism. A compositionally biased stretch (basic and acidic residues) spans 474–499; that stretch reads RSVDLRHDKSRPADMELKKYNEEKKA. The segment at 474 to 510 is disordered; the sequence is RSVDLRHDKSRPADMELKKYNEEKKANRGISPAREYN.

This sequence belongs to the protein kinase superfamily. RIO-type Ser/Thr kinase family. It depends on Mg(2+) as a cofactor. As to expression, expressed in tail neurons (PVQ and PHAL/PQR).

It catalyses the reaction L-seryl-[protein] + ATP = O-phospho-L-seryl-[protein] + ADP + H(+). The catalysed reaction is L-threonyl-[protein] + ATP = O-phospho-L-threonyl-[protein] + ADP + H(+). The protein is Serine/threonine-protein kinase RIO3 (riok-3) of Caenorhabditis elegans.